Here is a 383-residue protein sequence, read N- to C-terminus: tRNA-specific 2-thiouridylase MnmA (383 aa).

Residues 9 to 16 (GMSGGVDS) and Met35 each bind ATP. The interaction with target base in tRNA stretch occupies residues 95 to 97 (NPD). The Nucleophile role is filled by Cys100. The cysteines at positions 100 and 196 are disulfide-linked. Residue Gly124 coordinates ATP. The interval 146–148 (KDQ) is interaction with tRNA. The active-site Cysteine persulfide intermediate is Cys196. The interaction with tRNA stretch occupies residues 308–309 (RY).

Belongs to the MnmA/TRMU family.

It is found in the cytoplasm. It catalyses the reaction S-sulfanyl-L-cysteinyl-[protein] + uridine(34) in tRNA + AH2 + ATP = 2-thiouridine(34) in tRNA + L-cysteinyl-[protein] + A + AMP + diphosphate + H(+). Catalyzes the 2-thiolation of uridine at the wobble position (U34) of tRNA, leading to the formation of s(2)U34. The protein is tRNA-specific 2-thiouridylase MnmA of Burkholderia pseudomallei (strain 1106a).